Reading from the N-terminus, the 740-residue chain is Autotransporter adhesin BtaE (740 aa).

The first 11 residues, 1 to 11 (MFGLSVNHAYA), serve as a signal peptide directing secretion. The tract at residues 12–647 (GPGIFINDGT…LQTLDQANAY (636 aa)) is surface exposed passenger domain. The interval 648 to 686 (TDKKFGKLNEDIVATRIEARQAAAIGLAAASLRYDDRPG) is outer membrane translocation of the passenger domain. The next 4 beta stranded transmembrane spans lie at 686-696 (GKISAAIGGGF), 700-710 (EGAVALGLGHT), 719-725 (NLSAATS), and 728-739 (NWGMGAGFSYTF). Positions 687 to 740 (KISAAIGGGFWRGEGAVALGLGHTSEDQRMRSNLSAATSGGNWGMGAGFSYTFN) are translocator domain.

The protein belongs to the autotransporter-2 (AT-2) (TC 1.B.40) family. Homotrimer.

The protein localises to the cell surface. It localises to the cell outer membrane. Binds to hyaluronic acid and epithelial cells, and is required for full virulence in the mouse model. The sequence is that of Autotransporter adhesin BtaE from Brucella suis biovar 1 (strain 1330).